A 145-amino-acid chain; its full sequence is NADH-quinone oxidoreductase subunit A (145 aa).

3 helical membrane passes run 14–34 (FAVF…GAWF), 66–86 (FYLV…LYAW), and 96–116 (VGFV…FYLV).

Belongs to the complex I subunit 3 family. NDH-1 is composed of 13 different subunits. Subunits NuoA, H, J, K, L, M, N constitute the membrane sector of the complex.

It is found in the cell inner membrane. The enzyme catalyses a quinone + NADH + 5 H(+)(in) = a quinol + NAD(+) + 4 H(+)(out). In terms of biological role, NDH-1 shuttles electrons from NADH, via FMN and iron-sulfur (Fe-S) centers, to quinones in the respiratory chain. The immediate electron acceptor for the enzyme in this species is believed to be ubiquinone. Couples the redox reaction to proton translocation (for every two electrons transferred, four hydrogen ions are translocated across the cytoplasmic membrane), and thus conserves the redox energy in a proton gradient. In Erwinia tasmaniensis (strain DSM 17950 / CFBP 7177 / CIP 109463 / NCPPB 4357 / Et1/99), this protein is NADH-quinone oxidoreductase subunit A.